We begin with the raw amino-acid sequence, 70 residues long: PPF2L antigen (70 aa).

The sequence is that of PPF2L antigen from Plasmodium falciparum (isolate Palo Alto / Uganda).